The chain runs to 334 residues: Holliday junction branch migration complex subunit RuvB (334 aa).

A large ATPase domain (RuvB-L) region spans residues Ala4–Tyr184. Residues Ile23, Arg24, Gly65, Lys68, Thr69, Thr70, Glu131–Tyr133, Arg174, Tyr184, and Arg221 contribute to the ATP site. Thr69 lines the Mg(2+) pocket. The tract at residues Gln185 to Asn255 is small ATPAse domain (RuvB-S). Positions Ala258–Glu334 are head domain (RuvB-H). Residues Arg294, Arg313, and Arg318 each contribute to the DNA site.

This sequence belongs to the RuvB family. Homohexamer. Forms an RuvA(8)-RuvB(12)-Holliday junction (HJ) complex. HJ DNA is sandwiched between 2 RuvA tetramers; dsDNA enters through RuvA and exits via RuvB. An RuvB hexamer assembles on each DNA strand where it exits the tetramer. Each RuvB hexamer is contacted by two RuvA subunits (via domain III) on 2 adjacent RuvB subunits; this complex drives branch migration. In the full resolvosome a probable DNA-RuvA(4)-RuvB(12)-RuvC(2) complex forms which resolves the HJ.

It localises to the cytoplasm. It carries out the reaction ATP + H2O = ADP + phosphate + H(+). The RuvA-RuvB-RuvC complex processes Holliday junction (HJ) DNA during genetic recombination and DNA repair, while the RuvA-RuvB complex plays an important role in the rescue of blocked DNA replication forks via replication fork reversal (RFR). RuvA specifically binds to HJ cruciform DNA, conferring on it an open structure. The RuvB hexamer acts as an ATP-dependent pump, pulling dsDNA into and through the RuvAB complex. RuvB forms 2 homohexamers on either side of HJ DNA bound by 1 or 2 RuvA tetramers; 4 subunits per hexamer contact DNA at a time. Coordinated motions by a converter formed by DNA-disengaged RuvB subunits stimulates ATP hydrolysis and nucleotide exchange. Immobilization of the converter enables RuvB to convert the ATP-contained energy into a lever motion, pulling 2 nucleotides of DNA out of the RuvA tetramer per ATP hydrolyzed, thus driving DNA branch migration. The RuvB motors rotate together with the DNA substrate, which together with the progressing nucleotide cycle form the mechanistic basis for DNA recombination by continuous HJ branch migration. Branch migration allows RuvC to scan DNA until it finds its consensus sequence, where it cleaves and resolves cruciform DNA. The polypeptide is Holliday junction branch migration complex subunit RuvB (Yersinia pseudotuberculosis serotype O:1b (strain IP 31758)).